The sequence spans 178 residues: Caveolin-1 (178 aa).

S2 carries the N-acetylserine modification. Phosphoserine is present on S2. Residues 2–94 are required for homooligomerization; that stretch reads SGGKYVDSEG…WKASFTTFTV (93 aa). The Cytoplasmic portion of the chain corresponds to 2–104; sequence SGGKYVDSEG…TKYWFYRLLS (103 aa). K5 is modified (N6-acetyllysine; alternate). A Glycyl lysine isopeptide (Lys-Gly) (interchain with G-Cter in ubiquitin); alternate cross-link involves residue K5. Residue Y6 is modified to Phosphotyrosine. S9 bears the Phosphoserine mark. At Y14 the chain carries Phosphotyrosine; by ABL1. Y25 bears the Phosphotyrosine mark. Residues K26, K30, K39, K47, and K57 each participate in a glycyl lysine isopeptide (Lys-Gly) (interchain with G-Cter in ubiquitin) cross-link. Residues 82-94 are interaction with CAVIN3; it reads DGIWKASFTTFTV. Residues 105–125 constitute an intramembrane region (helical); sequence TIFGIPMALIWGIYFAILSFL. The Cytoplasmic portion of the chain corresponds to 126-178; the sequence is HIWAVVPCIKSFLIEIQCISRVYSIYVHTFCDPLFEAIGKIFSNVRISMQKEI. Positions 131–142 are interacts with SPRY1, SPRY2, SPRY3 and SPRY4; that stretch reads VPCIKSFLIEIQ. S-palmitoyl cysteine attachment occurs at residues C133, C143, and C156. The tract at residues 149 to 160 is interacts with SPRY1, SPRY2, and SPRY4; sequence SIYVHTFCDPLF. The interval 167-178 is interacts with SPRY1, SPRY2, SPRY3 and SPRY4; sequence FSNVRISMQKEI.

Belongs to the caveolin family. As to quaternary structure, homooligomer. Interacts with GLIPR2. Interacts with NOSTRIN. Interacts with SNAP25 and STX1A. Interacts (via the N-terminus) with DPP4; the interaction is direct. Interacts with CTNNB1, CDH1 and JUP. Interacts with PACSIN2; this interaction induces membrane tubulation. Interacts with SLC7A9. Interacts with BMX and BTK. Interacts with TGFBR1. Interacts with CAVIN3 (via leucine-zipper domain) in a cholesterol-sensitive manner. Interacts with CAVIN1. Interacts with EHD2 in a cholesterol-dependent manner. Forms a ternary complex with UBXN6 and VCP; mediates CAV1 targeting to lysosomes for degradation. Interacts with ABCG1; this interaction regulates ABCG1-mediated cholesterol efflux. Interacts with NEU3; this interaction enhances NEU3 sialidase activity within caveola. Interacts (via C-terminus) with SPRY1, SPRY2 (via C-terminus), SPRY3, and SPRY4. Interacts with IGFBP5; this interaction allows trafficking of IGFBP5 from the plasma membrane to the nucleus. In terms of processing, phosphorylated at Tyr-14 by ABL1 in response to oxidative stress. Post-translationally, ubiquitinated. Undergo monoubiquitination and multi- and/or polyubiquitination. Monoubiquitination of N-terminal lysines promotes integration in a ternary complex with UBXN6 and VCP which promotes oligomeric CAV1 targeting to lysosomes for degradation. Ubiquitinated by ZNRF1; leading to degradation and modulation of the TLR4-mediated immune response.

The protein localises to the golgi apparatus membrane. The protein resides in the cell membrane. It localises to the membrane. It is found in the caveola. Its subcellular location is the membrane raft. In terms of biological role, may act as a scaffolding protein within caveolar membranes. Forms a stable heterooligomeric complex with CAV2 that targets to lipid rafts and drives caveolae formation. Mediates the recruitment of CAVIN proteins (CAVIN1/2/3/4) to the caveolae. Interacts directly with G-protein alpha subunits and can functionally regulate their activity. Involved in the costimulatory signal essential for T-cell receptor (TCR)-mediated T-cell activation. Its binding to DPP4 induces T-cell proliferation and NF-kappa-B activation in a T-cell receptor/CD3-dependent manner. Recruits CTNNB1 to caveolar membranes and may regulate CTNNB1-mediated signaling through the Wnt pathway. Negatively regulates TGFB1-mediated activation of SMAD2/3 by mediating the internalization of TGFBR1 from membrane rafts leading to its subsequent degradation. Binds 20(S)-hydroxycholesterol (20(S)-OHC). The chain is Caveolin-1 (CAV1) from Oryctolagus cuniculus (Rabbit).